The primary structure comprises 238 residues: Pyridoxine 5'-phosphate synthase (238 aa).

3-amino-2-oxopropyl phosphate is bound by residues Asn-7 and Arg-18. His-43 (proton acceptor) is an active-site residue. 1-deoxy-D-xylulose 5-phosphate contacts are provided by Arg-45 and His-50. Glu-70 serves as the catalytic Proton acceptor. Residue Thr-100 coordinates 1-deoxy-D-xylulose 5-phosphate. His-190 serves as the catalytic Proton donor. Residues Asp-191 and 213–214 (GH) each bind 3-amino-2-oxopropyl phosphate.

It belongs to the PNP synthase family. Homooctamer; tetramer of dimers.

The protein resides in the cytoplasm. The enzyme catalyses 3-amino-2-oxopropyl phosphate + 1-deoxy-D-xylulose 5-phosphate = pyridoxine 5'-phosphate + phosphate + 2 H2O + H(+). Its pathway is cofactor biosynthesis; pyridoxine 5'-phosphate biosynthesis; pyridoxine 5'-phosphate from D-erythrose 4-phosphate: step 5/5. Functionally, catalyzes the complicated ring closure reaction between the two acyclic compounds 1-deoxy-D-xylulose-5-phosphate (DXP) and 3-amino-2-oxopropyl phosphate (1-amino-acetone-3-phosphate or AAP) to form pyridoxine 5'-phosphate (PNP) and inorganic phosphate. This chain is Pyridoxine 5'-phosphate synthase, found in Phocaeicola vulgatus (strain ATCC 8482 / DSM 1447 / JCM 5826 / CCUG 4940 / NBRC 14291 / NCTC 11154) (Bacteroides vulgatus).